Reading from the N-terminus, the 309-residue chain is UDP-N-acetylenolpyruvoylglucosamine reductase (309 aa).

Positions 34-221 (RVGGPAQVLF…TAAREAAQPI (188 aa)) constitute an FAD-binding PCMH-type domain. Residue arginine 179 is part of the active site. The active-site Proton donor is the serine 228. The active site involves glutamate 298.

Belongs to the MurB family. FAD serves as cofactor.

It localises to the cytoplasm. The catalysed reaction is UDP-N-acetyl-alpha-D-muramate + NADP(+) = UDP-N-acetyl-3-O-(1-carboxyvinyl)-alpha-D-glucosamine + NADPH + H(+). It participates in cell wall biogenesis; peptidoglycan biosynthesis. Cell wall formation. This is UDP-N-acetylenolpyruvoylglucosamine reductase from Methylorubrum populi (strain ATCC BAA-705 / NCIMB 13946 / BJ001) (Methylobacterium populi).